We begin with the raw amino-acid sequence, 720 residues long: Fatty acid CoA ligase Acsl3 (720 aa).

The chain crosses the membrane as a helical; Signal-anchor for type III membrane protein span at residues isoleucine 21–phenylalanine 41. Over tyrosine 42 to lysine 720 the chain is Cytoplasmic. Serine 683 bears the Phosphoserine mark.

The protein belongs to the ATP-dependent AMP-binding enzyme family. Mg(2+) serves as cofactor.

It localises to the mitochondrion outer membrane. The protein resides in the peroxisome membrane. The protein localises to the microsome membrane. Its subcellular location is the endoplasmic reticulum membrane. The enzyme catalyses a long-chain fatty acid + ATP + CoA = a long-chain fatty acyl-CoA + AMP + diphosphate. It carries out the reaction (E)-hexadec-2-enoate + ATP + CoA = (2E)-hexadecenoyl-CoA + AMP + diphosphate. The catalysed reaction is (5Z,8Z,11Z,14Z)-eicosatetraenoate + ATP + CoA = (5Z,8Z,11Z,14Z)-eicosatetraenoyl-CoA + AMP + diphosphate. It catalyses the reaction 15-hydroxy-(5Z,8Z,11Z,13E)-eicosatetraenoate + ATP + CoA = 15-hydroxy-(5Z,8Z,11Z,13E)-eicosatetraenoyl-CoA + AMP + diphosphate. The enzyme catalyses 12-hydroxy-(5Z,8Z,10E,14Z)-eicosatetraenoate + ATP + CoA = 12-hydroxy-(5Z,8Z,10E,14Z)-eicosatetraenoyl-CoA + AMP + diphosphate. It carries out the reaction 5-hydroxy-(6E,8Z,11Z,14Z)-eicosatetraenoate + ATP + CoA = 5-hydroxy-(6E,8Z,11Z,14Z)-eicosatetraenoyl-CoA + AMP + diphosphate. The catalysed reaction is 14,15-epoxy-(5Z,8Z,11Z)-eicosatrienoate + ATP + CoA = 14,15-epoxy-(5Z,8Z,11Z)-eicosatrienoyl-CoA + AMP + diphosphate. It catalyses the reaction 11,12-epoxy-(5Z,8Z,14Z)-eicosatrienoate + ATP + CoA = 11,12-epoxy-(5Z,8Z,14Z)-eicosatrienoyl-CoA + AMP + diphosphate. The enzyme catalyses a medium-chain fatty acid + ATP + CoA = a medium-chain fatty acyl-CoA + AMP + diphosphate. It carries out the reaction hexadecanoate + ATP + CoA = hexadecanoyl-CoA + AMP + diphosphate. The catalysed reaction is tetradecanoate + ATP + CoA = tetradecanoyl-CoA + AMP + diphosphate. It catalyses the reaction dodecanoate + ATP + CoA = dodecanoyl-CoA + AMP + diphosphate. The enzyme catalyses octadecanoate + ATP + CoA = octadecanoyl-CoA + AMP + diphosphate. It carries out the reaction eicosanoate + ATP + CoA = eicosanoyl-CoA + AMP + diphosphate. The catalysed reaction is (9Z)-octadecenoate + ATP + CoA = (9Z)-octadecenoyl-CoA + AMP + diphosphate. It catalyses the reaction (9Z)-hexadecenoate + ATP + CoA = (9Z)-hexadecenoyl-CoA + AMP + diphosphate. The enzyme catalyses (9Z,12Z)-octadecadienoate + ATP + CoA = (9Z,12Z)-octadecadienoyl-CoA + AMP + diphosphate. It carries out the reaction (9Z,12Z,15Z)-octadecatrienoate + ATP + CoA = (9Z,12Z,15Z)-octadecatrienoyl-CoA + AMP + diphosphate. The catalysed reaction is (4Z,7Z,10Z,13Z,16Z,19Z)-docosahexaenoate + ATP + CoA = (4Z,7Z,10Z,13Z,16Z,19Z)-docosahexaenoyl-CoA + AMP + diphosphate. It catalyses the reaction (5Z,8Z,11Z,14Z,17Z)-eicosapentaenoate + ATP + CoA = (5Z,8Z,11Z,14Z,17Z)-eicosapentaenoyl-CoA + AMP + diphosphate. The enzyme catalyses a fatty acid + ATP + CoA = a fatty acyl-CoA + AMP + diphosphate. Its function is as follows. Acyl-CoA synthetases (ACSL) activates long-chain fatty acids for both synthesis of cellular lipids, and degradation via beta-oxidation. ACSL3 is required for the incorporation of fatty acids into phosphatidylcholine, the major phospholipid located on the surface of VLDL (very low density lipoproteins). Has mainly an anabolic role in energy metabolism. Mediates hepatic lipogenesis. Preferentially uses myristate, laurate, arachidonate and eicosapentaenoate as substrates. Both isoforms exhibit the same level of activity. This is Fatty acid CoA ligase Acsl3 from Mus musculus (Mouse).